Here is a 365-residue protein sequence, read N- to C-terminus: tRNA/tmRNA (uracil-C(5))-methyltransferase (365 aa).

The S-adenosyl-L-methionine site is built by Gln189, Tyr217, Asn222, Glu238, and Asp298. Cys323 acts as the Nucleophile in catalysis. Glu357 acts as the Proton acceptor in catalysis.

This sequence belongs to the class I-like SAM-binding methyltransferase superfamily. RNA M5U methyltransferase family. TrmA subfamily.

The enzyme catalyses uridine(54) in tRNA + S-adenosyl-L-methionine = 5-methyluridine(54) in tRNA + S-adenosyl-L-homocysteine + H(+). It carries out the reaction uridine(341) in tmRNA + S-adenosyl-L-methionine = 5-methyluridine(341) in tmRNA + S-adenosyl-L-homocysteine + H(+). In terms of biological role, dual-specificity methyltransferase that catalyzes the formation of 5-methyluridine at position 54 (m5U54) in all tRNAs, and that of position 341 (m5U341) in tmRNA (transfer-mRNA). This chain is tRNA/tmRNA (uracil-C(5))-methyltransferase, found in Shewanella pealeana (strain ATCC 700345 / ANG-SQ1).